Consider the following 290-residue polypeptide: Porphobilinogen deaminase (290 aa).

Cys-238 is modified (S-(dipyrrolylmethanemethyl)cysteine).

Belongs to the HMBS family. In terms of assembly, monomer. Dipyrromethane serves as cofactor.

The enzyme catalyses 4 porphobilinogen + H2O = hydroxymethylbilane + 4 NH4(+). It functions in the pathway porphyrin-containing compound metabolism; protoporphyrin-IX biosynthesis; coproporphyrinogen-III from 5-aminolevulinate: step 2/4. Its function is as follows. Tetrapolymerization of the monopyrrole PBG into the hydroxymethylbilane pre-uroporphyrinogen in several discrete steps. This Clostridium botulinum (strain Eklund 17B / Type B) protein is Porphobilinogen deaminase.